The chain runs to 252 residues: MSLLTEVETYVLSIVPSGPLKAEIAQRLEDVFAGKNTDLEALMEWLKTRPILSPLTKGILGFVFTLTVPSERGLQRRRFVQNALNGNGDPNNMDRAVKLYRKLKREITFHGAKEVALSYSTGALASCMGLIYNRMGTVTTEVAFGLVCATCEQIADSQHRSHRQMVTTTNPLIRHENRMVLASTTAKAMEQMAGSSEQAAEAMEVASQARQMVQAMRTIGTHPSSSAGLKDDLLENLQAYQKRMGVQMQRFK.

A membrane-binding region spans residues 1 to 164 (MSLLTEVETY…ADSQHRSHRQ (164 aa)). A Nuclear localization signal motif is present at residues 101–105 (RKLKR). Positions 165–252 (MVTTTNPLIR…RMGVQMQRFK (88 aa)) are RNP-binding.

The protein belongs to the influenza viruses Matrix protein M1 family. Homodimer and homomultimer. Interacts with NEP. Binds ribonucleocapsid by both interacting with genomic RNA and NP protein. May interact with HA and NA. Cannot bind NP without genomic RNA.

The protein localises to the virion membrane. It localises to the host nucleus. Functionally, plays critical roles in virus replication, from virus entry and uncoating to assembly and budding of the virus particle. M1 binding to ribonucleocapsids (RNPs) in nucleus seems to inhibit viral transcription. Interaction of viral NEP with M1-RNP is thought to promote nuclear export of the complex, which is targeted to the virion assembly site at the apical plasma membrane in polarized epithelial cells. Interactions with NA and HA may bring M1, a non-raft-associated protein, into lipid rafts. Forms a continuous shell on the inner side of the lipid bilayer in virion, where it binds the RNP. During virus entry into cell, the M2 ion channel acidifies the internal virion core, inducing M1 dissociation from the RNP. M1-free RNPs are transported to the nucleus, where viral transcription and replication can take place. Determines the virion's shape: spherical or filamentous. Clinical isolates of influenza are characterized by the presence of significant proportion of filamentous virions, whereas after multiple passage on eggs or cell culture, virions have only spherical morphology. Filamentous virions are thought to be important to infect neighboring cells, and spherical virions more suited to spread through aerosol between hosts organisms. In Influenza A virus (strain A/Grey teal/Australia/2/1979 H4N4), this protein is Matrix protein 1.